The following is a 33-amino-acid chain: Cytochrome b6-f complex subunit 8 (33 aa).

The helical transmembrane segment at 2–22 threads the bilayer; that stretch reads LFTFAWASLAAIFTFSIAMVV.

It belongs to the PetN family. As to quaternary structure, the 4 large subunits of the cytochrome b6-f complex are cytochrome b6, subunit IV (17 kDa polypeptide, PetD), cytochrome f and the Rieske protein, while the 4 small subunits are PetG, PetL, PetM and PetN. The complex functions as a dimer.

The protein resides in the cellular thylakoid membrane. In terms of biological role, component of the cytochrome b6-f complex, which mediates electron transfer between photosystem II (PSII) and photosystem I (PSI), cyclic electron flow around PSI, and state transitions. The chain is Cytochrome b6-f complex subunit 8 from Prochlorococcus marinus (strain MIT 9211).